The primary structure comprises 196 residues: DnaA initiator-associating protein DiaA (196 aa).

Positions 34–196 (LVQSLLNGNK…DNTLFPHQDD (163 aa)) constitute an SIS domain.

Belongs to the SIS family. DiaA subfamily. As to quaternary structure, homotetramer; dimer of dimers.

Functionally, required for the timely initiation of chromosomal replication via direct interactions with the DnaA initiator protein. The polypeptide is DnaA initiator-associating protein DiaA (Enterobacter sp. (strain 638)).